The following is a 312-amino-acid chain: Transcriptional regulator protein Pur-beta (312 aa).

Positions 1–32 are disordered; the sequence is MADGDSGSERGGGGGPCGFQPASRGGGEQETQ. A2 carries the N-acetylalanine modification. Residues S6 and S8 each carry the phosphoserine modification. R24 carries the post-translational modification Omega-N-methylarginine. The DNA-binding stretch occupies residues 28 to 254; it reads EQETQELASK…LRVSEVKPSY (227 aa). Position 31 is a phosphothreonine (T31). At S101 the chain carries Phosphoserine. R152 is subject to Omega-N-methylarginine. An N6-acetyllysine modification is found at K267. A compositionally biased stretch (basic and acidic residues) spans 284–295; sequence ERQRDKLYERRG. Residues 284 to 312 are disordered; that stretch reads ERQRDKLYERRGGGSGGGEESEGEEVDED. R294 carries the post-translational modification Omega-N-methylarginine. Phosphoserine is present on residues S298 and S304. Acidic residues predominate over residues 302-312; that stretch reads EESEGEEVDED.

It belongs to the PUR DNA-binding protein family. In terms of assembly, homodimer, heterodimer with PURA and heterotrimer with PURA and YBX1/Y-box protein 1. Interacts with MYOCD and SRF. As to expression, expressed in myocardium of heart failure patients.

Its subcellular location is the nucleus. In terms of biological role, transcriptional regulator which can act as an activator or a repressor. Represses the transcription of ACTA2 in fibroblasts and smooth muscle cells via its ability to interact with the purine-rich strand of a MCAT- containing element in the 5' flanking region of the gene. Represses the transcription of MYOCD, capable of repressing all isoforms of MYOCD but the magnitude of the repressive effects is most notable for the SMC- specific isoforms. Promotes hepatic glucose production by activating the transcription of ADCY6, leading to cAMP accumulation, increased PKA activity, CREB activation, and increased transcription of PCK1 and G6PC genes. Has capacity to bind repeated elements in single-stranded DNA such as the purine-rich single strand of the PUR element located upstream of the MYC gene. Participates in transcriptional and translational regulation of alpha-MHC expression in cardiac myocytes by binding to the purine-rich negative regulatory (PNR) element Modulates constitutive liver galectin-3 gene transcription by binding to its promoter. May play a role in the dendritic transport of a subset of mRNAs. The polypeptide is Transcriptional regulator protein Pur-beta (PURB) (Homo sapiens (Human)).